The chain runs to 206 residues: Bis(5'-adenosyl)-triphosphatase (206 aa).

The 113-residue stretch at 3 to 115 (KPIYFSKFLV…KINNVGDLIY (113 aa)) folds into the HIT domain. Residues 96–100 (HLHTH) carry the Histidine triad motif motif. Residue His-98 is the Tele-AMP-histidine intermediate of the active site. Residues 143–164 (RQARKNNSTSATVDGDELSQGP) are disordered.

Homodimer. Requires Mn(2+) as cofactor.

The protein localises to the cytoplasm. The protein resides in the nucleus. It localises to the mitochondrion. The catalysed reaction is P(1),P(3)-bis(5'-adenosyl) triphosphate + H2O = AMP + ADP + 2 H(+). Functionally, cleaves A-5'-PPP-5'A to yield AMP and ADP. Can cleave all dinucleoside polyphosphates, provided the phosphate chain contains at least 3 phosphates and that 1 of the 2 bases composing the nucleotide is a purine. Is most effective on dinucleoside triphosphates. Negatively regulates intracellular dinucleoside polyphosphate levels, which elevate following heat shock. This Saccharomyces cerevisiae (strain RM11-1a) (Baker's yeast) protein is Bis(5'-adenosyl)-triphosphatase (HNT2).